A 254-amino-acid chain; its full sequence is Isoprenyl transferase (254 aa).

Residue Asp-12 is part of the active site. Residue Asp-12 participates in Mg(2+) binding. Residues 13–16, Trp-17, Arg-25, His-29, and 57–59 each bind substrate; these read GNGR and SSE. Asn-60 (proton acceptor) is an active-site residue. Substrate contacts are provided by residues Trp-61, Arg-63, Arg-180, and 186–188; that span reads RLS. Position 199 (Glu-199) interacts with Mg(2+).

It belongs to the UPP synthase family. As to quaternary structure, homodimer. Mg(2+) serves as cofactor.

Its function is as follows. Catalyzes the condensation of isopentenyl diphosphate (IPP) with allylic pyrophosphates generating different type of terpenoids. The polypeptide is Isoprenyl transferase (Brucella suis biovar 1 (strain 1330)).